The primary structure comprises 62 residues: Defensin-like protein A (62 aa).

Positions 1–26 are cleaved as a signal peptide; the sequence is MRCVVLFMVSCLLIVLLINHFEEVEA. C42 and C52 are joined by a disulfide.

It belongs to the DEFL family.

It is found in the secreted. Functionally, truncated and inactivated form of SCRA, a protein involved in male-mediated self-incompatibility when active. Most A.thaliana cultivars contain such an inactive form and thus, are self-fertiles. In Arabidopsis thaliana (Mouse-ear cress), this protein is Defensin-like protein A (SCRA).